Here is a 340-residue protein sequence, read N- to C-terminus: tRNA N6-adenosine threonylcarbamoyltransferase (340 aa).

2 residues coordinate Fe cation: H115 and H119. Substrate is bound by residues 138-142, D171, G184, D188, and N278; that span reads VVSGG. D306 is a Fe cation binding site.

Belongs to the KAE1 / TsaD family. The cofactor is Fe(2+).

Its subcellular location is the cytoplasm. It carries out the reaction L-threonylcarbamoyladenylate + adenosine(37) in tRNA = N(6)-L-threonylcarbamoyladenosine(37) in tRNA + AMP + H(+). Its function is as follows. Required for the formation of a threonylcarbamoyl group on adenosine at position 37 (t(6)A37) in tRNAs that read codons beginning with adenine. Is involved in the transfer of the threonylcarbamoyl moiety of threonylcarbamoyl-AMP (TC-AMP) to the N6 group of A37, together with TsaE and TsaB. TsaD likely plays a direct catalytic role in this reaction. The chain is tRNA N6-adenosine threonylcarbamoyltransferase from Clostridium botulinum (strain Kyoto / Type A2).